The sequence spans 200 residues: UPF0316 protein Mhun_0543 (200 aa).

Transmembrane regions (helical) follow at residues 3-23 (VGFLSSDLFTFGLIPVLIFLA), 44-64 (FIAPVFGFFEVTIWLLAIGQV), and 71-91 (PICYIAYGAGFAAGTYIGMEL).

This sequence belongs to the UPF0316 family.

The protein localises to the cell membrane. This chain is UPF0316 protein Mhun_0543, found in Methanospirillum hungatei JF-1 (strain ATCC 27890 / DSM 864 / NBRC 100397 / JF-1).